The chain runs to 210 residues: ATP-dependent Clp protease proteolytic subunit (210 aa).

Ser106 (nucleophile) is an active-site residue. Residue His131 is part of the active site.

This sequence belongs to the peptidase S14 family. In terms of assembly, fourteen ClpP subunits assemble into 2 heptameric rings which stack back to back to give a disk-like structure with a central cavity, resembling the structure of eukaryotic proteasomes.

The protein resides in the cytoplasm. The enzyme catalyses Hydrolysis of proteins to small peptides in the presence of ATP and magnesium. alpha-casein is the usual test substrate. In the absence of ATP, only oligopeptides shorter than five residues are hydrolyzed (such as succinyl-Leu-Tyr-|-NHMec, and Leu-Tyr-Leu-|-Tyr-Trp, in which cleavage of the -Tyr-|-Leu- and -Tyr-|-Trp bonds also occurs).. In terms of biological role, cleaves peptides in various proteins in a process that requires ATP hydrolysis. Has a chymotrypsin-like activity. Plays a major role in the degradation of misfolded proteins. The protein is ATP-dependent Clp protease proteolytic subunit of Azospirillum brasilense.